Reading from the N-terminus, the 51-residue chain is Large ribosomal subunit protein eL39 (51 aa).

This sequence belongs to the eukaryotic ribosomal protein eL39 family.

The sequence is that of Large ribosomal subunit protein eL39 (rpl39e) from Methanocaldococcus jannaschii (strain ATCC 43067 / DSM 2661 / JAL-1 / JCM 10045 / NBRC 100440) (Methanococcus jannaschii).